Reading from the N-terminus, the 238-residue chain is Aspartate/glutamate leucyltransferase (238 aa).

This sequence belongs to the R-transferase family. Bpt subfamily.

It localises to the cytoplasm. The enzyme catalyses N-terminal L-glutamyl-[protein] + L-leucyl-tRNA(Leu) = N-terminal L-leucyl-L-glutamyl-[protein] + tRNA(Leu) + H(+). It catalyses the reaction N-terminal L-aspartyl-[protein] + L-leucyl-tRNA(Leu) = N-terminal L-leucyl-L-aspartyl-[protein] + tRNA(Leu) + H(+). Functionally, functions in the N-end rule pathway of protein degradation where it conjugates Leu from its aminoacyl-tRNA to the N-termini of proteins containing an N-terminal aspartate or glutamate. The protein is Aspartate/glutamate leucyltransferase of Shewanella sp. (strain ANA-3).